Reading from the N-terminus, the 209-residue chain is Uracil phosphoribosyltransferase (209 aa).

5-phospho-alpha-D-ribose 1-diphosphate-binding positions include Arg78, Arg103, and 130-138 (DPMFATGGT). Residues Ile193 and 198-200 (GDA) each bind uracil. Asp199 contacts 5-phospho-alpha-D-ribose 1-diphosphate.

It belongs to the UPRTase family. Requires Mg(2+) as cofactor.

The enzyme catalyses UMP + diphosphate = 5-phospho-alpha-D-ribose 1-diphosphate + uracil. It participates in pyrimidine metabolism; UMP biosynthesis via salvage pathway; UMP from uracil: step 1/1. Allosterically activated by GTP. In terms of biological role, catalyzes the conversion of uracil and 5-phospho-alpha-D-ribose 1-diphosphate (PRPP) to UMP and diphosphate. The sequence is that of Uracil phosphoribosyltransferase from Campylobacter fetus subsp. fetus (strain 82-40).